Here is a 629-residue protein sequence, read N- to C-terminus: Phosphomethylpyrimidine synthase (629 aa).

Residues 1-13 (MTTKSKNAINLSD) are compositionally biased toward polar residues. The tract at residues 1–22 (MTTKSKNAINLSDSAKVDEQSV) is disordered. Residues Asn233, Met262, Tyr291, His327, 347–349 (SRG), 388–391 (DGLR), and Glu427 each bind substrate. Residue His431 coordinates Zn(2+). Residue Tyr454 participates in substrate binding. Residue His495 coordinates Zn(2+). 3 residues coordinate [4Fe-4S] cluster: Cys575, Cys578, and Cys583.

This sequence belongs to the ThiC family. Homodimer. Requires [4Fe-4S] cluster as cofactor.

The enzyme catalyses 5-amino-1-(5-phospho-beta-D-ribosyl)imidazole + S-adenosyl-L-methionine = 4-amino-2-methyl-5-(phosphooxymethyl)pyrimidine + CO + 5'-deoxyadenosine + formate + L-methionine + 3 H(+). It functions in the pathway cofactor biosynthesis; thiamine diphosphate biosynthesis. Catalyzes the synthesis of the hydroxymethylpyrimidine phosphate (HMP-P) moiety of thiamine from aminoimidazole ribotide (AIR) in a radical S-adenosyl-L-methionine (SAM)-dependent reaction. The protein is Phosphomethylpyrimidine synthase of Pseudomonas fluorescens (strain Pf0-1).